A 188-amino-acid chain; its full sequence is Large ribosomal subunit protein bL35m (188 aa).

Belongs to the bacterial ribosomal protein bL35 family. As to quaternary structure, component of the mitochondrial large ribosomal subunit (mt-LSU). Mature mammalian 55S mitochondrial ribosomes consist of a small (28S) and a large (39S) subunit. The 28S small subunit contains a 12S ribosomal RNA (12S mt-rRNA) and 30 different proteins. The 39S large subunit contains a 16S rRNA (16S mt-rRNA), a copy of mitochondrial valine transfer RNA (mt-tRNA(Val)), which plays an integral structural role, and 52 different proteins.

It localises to the mitochondrion. The polypeptide is Large ribosomal subunit protein bL35m (MRPL35) (Homo sapiens (Human)).